The chain runs to 397 residues: Beta sliding clamp (397 aa).

It belongs to the beta sliding clamp family. As to quaternary structure, forms a ring-shaped head-to-tail homodimer around DNA which binds and tethers DNA polymerases and other proteins to the DNA. The DNA replisome complex has a single clamp-loading complex (3 tau and 1 each of delta, delta', psi and chi subunits) which binds 3 Pol III cores (1 core on the leading strand and 2 on the lagging strand) each with a beta sliding clamp dimer. Additional proteins in the replisome are other copies of gamma, psi and chi, Ssb, DNA helicase and RNA primase.

The protein localises to the cytoplasm. Its function is as follows. Confers DNA tethering and processivity to DNA polymerases and other proteins. Acts as a clamp, forming a ring around DNA (a reaction catalyzed by the clamp-loading complex) which diffuses in an ATP-independent manner freely and bidirectionally along dsDNA. Initially characterized for its ability to contact the catalytic subunit of DNA polymerase III (Pol III), a complex, multichain enzyme responsible for most of the replicative synthesis in bacteria; Pol III exhibits 3'-5' exonuclease proofreading activity. The beta chain is required for initiation of replication as well as for processivity of DNA replication. This chain is Beta sliding clamp (dnaN), found in Mycolicibacterium smegmatis (strain ATCC 700084 / mc(2)155) (Mycobacterium smegmatis).